The chain runs to 410 residues: Adenosylhomocysteinase (410 aa).

D117 and E142 together coordinate substrate. 143-145 provides a ligand contact to NAD(+); sequence TTT. Substrate contacts are provided by K172 and D176. Residues N177, 206–211, E229, 285–287, and N332 each bind NAD(+); these read GYGYCG and AGH.

It belongs to the adenosylhomocysteinase family. Requires NAD(+) as cofactor.

It is found in the cytoplasm. It catalyses the reaction S-adenosyl-L-homocysteine + H2O = L-homocysteine + adenosine. It participates in amino-acid biosynthesis; L-homocysteine biosynthesis; L-homocysteine from S-adenosyl-L-homocysteine: step 1/1. Functionally, may play a key role in the regulation of the intracellular concentration of adenosylhomocysteine. The sequence is that of Adenosylhomocysteinase from Thermoplasma volcanium (strain ATCC 51530 / DSM 4299 / JCM 9571 / NBRC 15438 / GSS1).